The primary structure comprises 455 residues: Rho GTPase-activating protein 3 (455 aa).

Polar residues predominate over residues 1-12 (MTNFSRSKSTGT). Positions 1–68 (MTNFSRSKST…HASRSGNGSG (68 aa)) are disordered. Residues 24-33 (GPDKYENIHN) show a composition bias toward basic and acidic residues. Positions 43-54 (STTSTDYYDAST) are enriched in low complexity. Residues 55 to 64 (PLSSHASRSG) are compositionally biased toward polar residues. Residues 105-118 (IGWPTEVKHVSHVT) enclose the CRIB domain. The region spanning 153 to 331 (KSMQCSYDDR…LILMNLKERE (179 aa)) is the Rho-GAP domain. Disordered regions lie at residues 342 to 366 (KQTSDPSEEWESQHSEILSPEKPNN) and 432 to 455 (FVSNRDEGRKGREAWSSRLSSLPW). Positions 435-446 (NRDEGRKGREAW) are enriched in basic and acidic residues.

As to expression, expressed in differentiating xylem cells.

It is found in the cell membrane. Its function is as follows. Acts as a GTPase activator for the Rac-type GTPase by converting it to an inactive GDP-bound state. Involved in secondary wall pattern formation. In association with ROPGEF4, mediates local activation of ARAC10/ROP11 to initiate the distinct pattern of secondary cell walls in xylem cells. The protein is Rho GTPase-activating protein 3 (ROPGAP3) of Arabidopsis thaliana (Mouse-ear cress).